The following is a 340-amino-acid chain: Toxin coregulated pilus biosynthesis protein E (340 aa).

Transmembrane regions (helical) follow at residues 108–131 (AISSMITPSVMLIVTMVVIAGYSV), 146–161 (WPGVTQALYNLGFSLY), and 312–333 (NISLITLALSVIWIFGAIFSLV).

This sequence belongs to the GSP F family.

It is found in the cell inner membrane. Functionally, probably involved in cholera toxin receptor (GM1) interaction in order to bring the cells within close proximity of the ganglioside for efficient toxin delivery. The protein is Toxin coregulated pilus biosynthesis protein E (tcpE) of Vibrio cholerae serotype O1 (strain ATCC 39315 / El Tor Inaba N16961).